The following is a 277-amino-acid chain: Large ribosomal subunit protein uL2 (277 aa).

Positions 222–277 (GVAMNPVDHPHGGGEGRTSGGRHPVTPWGKPTKGKKTRSNKATDKFIMRSRHQRKK) are disordered.

The protein belongs to the universal ribosomal protein uL2 family. As to quaternary structure, part of the 50S ribosomal subunit. Forms a bridge to the 30S subunit in the 70S ribosome.

One of the primary rRNA binding proteins. Required for association of the 30S and 50S subunits to form the 70S ribosome, for tRNA binding and peptide bond formation. It has been suggested to have peptidyltransferase activity; this is somewhat controversial. Makes several contacts with the 16S rRNA in the 70S ribosome. This is Large ribosomal subunit protein uL2 from Brucella ovis (strain ATCC 25840 / 63/290 / NCTC 10512).